The following is a 366-amino-acid chain: NADH-quinone oxidoreductase subunit D (366 aa).

It belongs to the complex I 49 kDa subunit family. As to quaternary structure, NDH-1 is composed of 14 different subunits. Subunits NuoB, C, D, E, F, and G constitute the peripheral sector of the complex.

It is found in the cell membrane. The catalysed reaction is a quinone + NADH + 5 H(+)(in) = a quinol + NAD(+) + 4 H(+)(out). NDH-1 shuttles electrons from NADH, via FMN and iron-sulfur (Fe-S) centers, to quinones in the respiratory chain. The immediate electron acceptor for the enzyme in this species is believed to be a menaquinone. Couples the redox reaction to proton translocation (for every two electrons transferred, four hydrogen ions are translocated across the cytoplasmic membrane), and thus conserves the redox energy in a proton gradient. The sequence is that of NADH-quinone oxidoreductase subunit D from Bacillus thuringiensis subsp. konkukian (strain 97-27).